Reading from the N-terminus, the 95-residue chain is Large ribosomal subunit protein uL23c (95 aa).

This sequence belongs to the universal ribosomal protein uL23 family. As to quaternary structure, part of the 50S ribosomal subunit.

It localises to the plastid. The protein resides in the chloroplast. Binds to 23S rRNA. In Chlamydomonas reinhardtii (Chlamydomonas smithii), this protein is Large ribosomal subunit protein uL23c (rpl23).